Consider the following 183-residue polypeptide: ADP-ribosylation factor-like protein 5 (183 aa).

Residues 27 to 34 (GLNAAGKT), 70 to 74 (DLGGQ), and 129 to 132 (NKQD) each bind GTP.

This sequence belongs to the small GTPase superfamily. Arf family.

May bind and exchange GTP and GDP. The polypeptide is ADP-ribosylation factor-like protein 5 (arl5) (Dictyostelium discoideum (Social amoeba)).